Consider the following 512-residue polypeptide: Matrix metalloproteinase-27 (512 aa).

Residues 1–17 (MKSFLLLFLLFVTFSSA) form the signal peptide. A propeptide spans 18–98 (LPADQKMENE…PRCGVPDVGQ (81 aa)) (activation peptide). A Cysteine switch motif is present at residues 89–96 (PRCGVPDV). Cysteine 91 is a binding site for Zn(2+). N-linked (GlcNAc...) asparagine glycosylation is present at asparagine 110. Ca(2+) contacts are provided by aspartate 121 and aspartate 155. Histidine 165 serves as a coordination point for Zn(2+). Ca(2+) is bound by residues aspartate 173, glycine 174, and valine 178. Histidine 181 contacts Zn(2+). Residues glycine 188 and aspartate 192 each coordinate Ca(2+). A Zn(2+)-binding site is contributed by histidine 194. Ca(2+)-binding residues include aspartate 196 and glutamate 199. Histidine 216 contacts Zn(2+). Residue glutamate 217 is part of the active site. Zn(2+)-binding residues include histidine 220 and histidine 226. Hemopexin repeat units follow at residues 276-325 (PHAC…WPSL), 326-371 (PADL…GFPR), 373-421 (VKKI…FPGI), and 422-465 (GLRV…WFQC). Cysteine 279 and cysteine 465 are oxidised to a cystine. Aspartate 286 lines the Ca(2+) pocket. Ca(2+) is bound by residues aspartate 377 and aspartate 426. Residues 466 to 512 (KEPLNSSLDFHFNQEKAYSGEVETLHHQSLSLLIFGIVHLLNKICSY) are required for retention in the endoplasmic reticulum.

Belongs to the peptidase M10A family. The cofactor is Ca(2+). Requires Zn(2+) as cofactor. N-glycosylated.

It localises to the endoplasmic reticulum. Matrix metalloproteinases degrade protein components of the extracellular matrix such as fibronectin, laminin, gelatins and/or collagens. This chain is Matrix metalloproteinase-27 (MMP27), found in Tupaia belangeri (Common tree shrew).